We begin with the raw amino-acid sequence, 386 residues long: MKHSATSSEAHARATWPLPEPTLAYFPNARFVPSDRDLDAGAARPIRGGVAVVDDSPDFGHVPVLLERCVELLTPALTRRHPDGSGAVLLDATLGAGGHAERFLADLPGLRLIALDRDPSALEIARERLARFADRITLVHMRYDGIAAALTESGYAATESVDGILFDLGVSSMQLDRPERGFAYAQDAPLDMRMDPGSPLTAADILNTYDEAELADILHRYGEERFARRIAAQIVRRRAKEPFTSTADLVSLLYQAIPAPARRTGGHPAKRTFQALRIAVNDELDTLRRALPAALDALAVDGRIVVLAYQSLEDRIVKRLFAQAVASRTPVDLPVELPGHEPRFRALTHGAGRADAAEIERNPRSAAVRLRALQRTQAPQATGKGD.

S-adenosyl-L-methionine-binding positions include 97-99 (GGH), Asp116, Tyr143, Asp167, and Gln174.

This sequence belongs to the methyltransferase superfamily. RsmH family.

The protein resides in the cytoplasm. The catalysed reaction is cytidine(1402) in 16S rRNA + S-adenosyl-L-methionine = N(4)-methylcytidine(1402) in 16S rRNA + S-adenosyl-L-homocysteine + H(+). Functionally, specifically methylates the N4 position of cytidine in position 1402 (C1402) of 16S rRNA. This is Ribosomal RNA small subunit methyltransferase H from Mycolicibacterium paratuberculosis (strain ATCC BAA-968 / K-10) (Mycobacterium paratuberculosis).